Reading from the N-terminus, the 217-residue chain is Putative thymidylate synthase (217 aa).

The active site involves Cys139.

Belongs to the thymidylate synthase family. Archaeal-type ThyA subfamily. As to quaternary structure, monomer.

It is found in the cytoplasm. The protein operates within pyrimidine metabolism; dTTP biosynthesis. Functionally, may catalyze the biosynthesis of dTMP using an unknown cosubstrate. The protein is Putative thymidylate synthase of Methanosarcina acetivorans (strain ATCC 35395 / DSM 2834 / JCM 12185 / C2A).